The following is a 422-amino-acid chain: Enolase (422 aa).

A (2R)-2-phosphoglycerate-binding site is contributed by Q162. E204 (proton donor) is an active-site residue. Mg(2+)-binding residues include D241, E285, and D312. K337, R366, S367, and K388 together coordinate (2R)-2-phosphoglycerate. Residue K337 is the Proton acceptor of the active site.

The protein belongs to the enolase family. Mg(2+) is required as a cofactor.

It is found in the cytoplasm. The protein resides in the secreted. The protein localises to the cell surface. It catalyses the reaction (2R)-2-phosphoglycerate = phosphoenolpyruvate + H2O. It functions in the pathway carbohydrate degradation; glycolysis; pyruvate from D-glyceraldehyde 3-phosphate: step 4/5. Its function is as follows. Catalyzes the reversible conversion of 2-phosphoglycerate (2-PG) into phosphoenolpyruvate (PEP). It is essential for the degradation of carbohydrates via glycolysis. This is Enolase from Streptococcus thermophilus.